A 194-amino-acid chain; its full sequence is Ribonuclease HII (194 aa).

The region spanning 3–193 (ILTAGVDEAG…VRNLLAQQAL (191 aa)) is the RNase H type-2 domain. A divalent metal cation-binding residues include Asp9, Glu10, and Asp101.

The protein belongs to the RNase HII family. Mn(2+) is required as a cofactor. Requires Mg(2+) as cofactor.

Its subcellular location is the cytoplasm. It carries out the reaction Endonucleolytic cleavage to 5'-phosphomonoester.. In terms of biological role, endonuclease that specifically degrades the RNA of RNA-DNA hybrids. The protein is Ribonuclease HII (rnhB) of Neisseria meningitidis serogroup A / serotype 4A (strain DSM 15465 / Z2491).